We begin with the raw amino-acid sequence, 89 residues long: Sec-independent protein translocase protein TatA (89 aa).

Residues 1-21 (MFGLSPAQLIILLVVILLIFG) form a helical membrane-spanning segment.

The protein belongs to the TatA/E family. In terms of assembly, the Tat system comprises two distinct complexes: a TatABC complex, containing multiple copies of TatA, TatB and TatC subunits, and a separate TatA complex, containing only TatA subunits. Substrates initially bind to the TatABC complex, which probably triggers association of the separate TatA complex to form the active translocon.

The protein localises to the cell inner membrane. Part of the twin-arginine translocation (Tat) system that transports large folded proteins containing a characteristic twin-arginine motif in their signal peptide across membranes. TatA could form the protein-conducting channel of the Tat system. The chain is Sec-independent protein translocase protein TatA from Haemophilus influenzae (strain ATCC 51907 / DSM 11121 / KW20 / Rd).